A 182-amino-acid polypeptide reads, in one-letter code: Histone deacetylase complex subunit SAP30L (182 aa).

At methionine 1 the chain carries N-acetylmethionine. Residues 1–10 show a composition bias toward acidic residues; the sequence is MNGFSTEEDS. A disordered region spans residues 1–22; it reads MNGFSTEEDSREGPPAAPAAAP. Intrachain disulfides connect cysteine 28-cysteine 29 and cysteine 37-cysteine 73. Residues 28 to 76 form an Atypical zinc finger; it reads CCLIADGERCVRPAGNASFSKRVQKSISQKKLKLDIDKSVRHLYICDFH. A Glycyl lysine isopeptide (Lys-Gly) (interchain with G-Cter in SUMO2) cross-link involves residue lysine 48. The interval 84 to 103 is disordered; it reads RNKRKRKASDDGGDSPEHDA. A Nuclear localization signal (NLS) motif is present at residues 85-90; sequence NKRKRK. The segment at 87-89 is important for DNA and phosphoinositide binding; it reads RKR. A phosphoserine mark is found at serine 92 and serine 98. Glycyl lysine isopeptide (Lys-Gly) (interchain with G-Cter in SUMO2) cross-links involve residues lysine 154, lysine 165, and lysine 174.

Belongs to the SAP30 family. In terms of assembly, interacts with components of the histone deacetylase complex SIN3A, HDAC1 and HDAC2. Binds histones and nucleosomes. Interacts with FEZ1.

It localises to the nucleus. Its subcellular location is the nucleolus. Its function is as follows. Functions as a transcription repressor, probably via its interaction with histone deacetylase complexes. Involved in the functional recruitment of the class 1 Sin3-histone deacetylase complex (HDAC) to the nucleolus. Binds DNA, apparently without sequence-specificity, and bends bound double-stranded DNA. Binds phosphoinositol phosphates (phosphoinositol 3-phosphate, phosphoinositol 4-phosphate and phosphoinositol 5-phosphate) via the same basic sequence motif that mediates DNA binding and nuclear import. The polypeptide is Histone deacetylase complex subunit SAP30L (Sap30l) (Mus musculus (Mouse)).